A 216-amino-acid polypeptide reads, in one-letter code: Cytidylate kinase (216 aa).

Residue 7–15 coordinates ATP; it reads GPSGTGKST.

This sequence belongs to the cytidylate kinase family. Type 1 subfamily.

It is found in the cytoplasm. It carries out the reaction CMP + ATP = CDP + ADP. The catalysed reaction is dCMP + ATP = dCDP + ADP. The protein is Cytidylate kinase of Chlamydia pneumoniae (Chlamydophila pneumoniae).